Consider the following 334-residue polypeptide: Glycosylinositol phosphorylceramide mannosyl transferase 1 (334 aa).

The Cytoplasmic portion of the chain corresponds to 1 to 26 (MGGGEVSKEMGACSLAYRRGDQKLRK). Residues 27-49 (FVTARSTKFLLFCCIAFVLVTIV) form a helical; Signal-anchor for type II membrane protein membrane-spanning segment. Topologically, residues 50–334 (CRSSRPWVNS…AVDSRNLWFW (285 aa)) are lumenal. Asparagine 58 is a glycosylation site (N-linked (GlcNAc...) asparagine). Substrate is bound by residues 145-150 (DSLNNR), 166-168 (DDD), arginine 196, and 258-262 (RNCED). Aspartate 168 contacts Mn(2+). The cysteines at positions 260 and 305 are disulfide-linked. Residue aspartate 262 is part of the active site. N-linked (GlcNAc...) asparagine glycosylation is present at asparagine 271. Substrate is bound by residues 289–302 (STGI…TEKR) and 292–302 (ISSIGGHTEKR).

It belongs to the glycosyltransferase 64 family. Mn(2+) serves as cofactor. As to expression, expressed in leaves, roots, stem, and flowers.

Its subcellular location is the golgi apparatus membrane. It functions in the pathway protein modification; protein glycosylation. The protein operates within sphingolipid metabolism. In terms of biological role, mannosyl transferase (ManT) required for the biosynthesis of mannose-carrying glycosylinositol phosphorylceramides (GIPCs). Maybe involved in cell-cell adhesion that maintains the integrity of organs by providing mechanical strength and facilitating the movement of metabolites throughout the plant during development. Prevents abscisic acid- (ABA-) mediated effects on development (e.g. cell size, flowering time, senescence). Probably implicated in beta-(1,4)-galactan biosynthesis thus being a cell-wall synthesis-related (CWSR) protein. The protein is Glycosylinositol phosphorylceramide mannosyl transferase 1 of Arabidopsis thaliana (Mouse-ear cress).